The following is a 611-amino-acid chain: Dolabella-3,7-dien-18-ol synthase TPS06 (611 aa).

Residues Asp-363, Asp-367, Asp-507, Thr-511, and Glu-515 each contribute to the Mg(2+) site. The short motif at 363-367 (DNTFD) is the DDXXD motif; degenerate element.

The protein belongs to the terpene synthase family. Tpsa subfamily. Requires Mg(2+) as cofactor. Mn(2+) is required as a cofactor. Predominantly expressed in flowers but also in stems, siliques, roots and leaves.

It localises to the cytoplasm. It carries out the reaction (2E,6E,10E)-geranylgeranyl diphosphate + H2O = (3E,7E)-dolabella-3,7-dien-18-ol + diphosphate. Its pathway is secondary metabolite biosynthesis; terpenoid biosynthesis. Involved in terpene biosynthesis in roots. Possesses sesquiterpene (C15) synthase activity and diterpene (C20) synthase activity in vitro. Possesses dolabella-3,7-dien-18-ol synthase activity in vitro. Catalyzes the formation of dolabella-3,7-dien-18-ol from geranylgeranyl diphosphate. This Arabidopsis thaliana (Mouse-ear cress) protein is Dolabella-3,7-dien-18-ol synthase TPS06.